The following is a 235-amino-acid chain: Protein C1orf43 homolog (235 aa).

Residues 11-31 (VNVVLVMAYGSLVFVLLFIFV) traverse the membrane as a helical segment.

The protein resides in the membrane. It is found in the golgi apparatus. It localises to the mitochondrion. Its function is as follows. General regulator of phagocytosis. Required to uptake Gram negative bacterium by macrophages. This is Protein C1orf43 homolog from Rattus norvegicus (Rat).